The primary structure comprises 168 residues: Cell division inhibitor SulA (168 aa).

The tract at residues 106 to 112 is ftsZ binding; the sequence is ALLTGNY. The interval 161–168 is lon protease binding; it reads KIHSYLYH.

This sequence belongs to the SulA family. In terms of assembly, interacts with FtsZ. Is rapidly cleaved and degraded by the Lon protease once DNA damage is repaired.

Functionally, component of the SOS system and an inhibitor of cell division. Accumulation of SulA causes rapid cessation of cell division and the appearance of long, non-septate filaments. In the presence of GTP, binds a polymerization-competent form of FtsZ in a 1:1 ratio, thus inhibiting FtsZ polymerization and therefore preventing it from participating in the assembly of the Z ring. This mechanism prevents the premature segregation of damaged DNA to daughter cells during cell division. This is Cell division inhibitor SulA from Yersinia pestis bv. Antiqua (strain Antiqua).